We begin with the raw amino-acid sequence, 382 residues long: Carbamoyl phosphate synthase small chain (382 aa).

Residues 1–189 (MIKSALLVLE…GLPEAKKEDE (189 aa)) form a CPSase region. Residues serine 47, glycine 241, and glycine 243 each contribute to the L-glutamine site. The 188-residue stretch at 193–380 (HVVAYDFGAK…IELIEQYRKT (188 aa)) folds into the Glutamine amidotransferase type-1 domain. The Nucleophile role is filled by cysteine 269. Residues leucine 270, glutamine 273, asparagine 311, glycine 313, and phenylalanine 314 each contribute to the L-glutamine site. Catalysis depends on residues histidine 353 and glutamate 355.

It belongs to the CarA family. In terms of assembly, composed of two chains; the small (or glutamine) chain promotes the hydrolysis of glutamine to ammonia, which is used by the large (or ammonia) chain to synthesize carbamoyl phosphate. Tetramer of heterodimers (alpha,beta)4.

The catalysed reaction is hydrogencarbonate + L-glutamine + 2 ATP + H2O = carbamoyl phosphate + L-glutamate + 2 ADP + phosphate + 2 H(+). The enzyme catalyses L-glutamine + H2O = L-glutamate + NH4(+). It functions in the pathway amino-acid biosynthesis; L-arginine biosynthesis; carbamoyl phosphate from bicarbonate: step 1/1. Its pathway is pyrimidine metabolism; UMP biosynthesis via de novo pathway; (S)-dihydroorotate from bicarbonate: step 1/3. Its function is as follows. Small subunit of the glutamine-dependent carbamoyl phosphate synthetase (CPSase). CPSase catalyzes the formation of carbamoyl phosphate from the ammonia moiety of glutamine, carbonate, and phosphate donated by ATP, constituting the first step of 2 biosynthetic pathways, one leading to arginine and/or urea and the other to pyrimidine nucleotides. The small subunit (glutamine amidotransferase) binds and cleaves glutamine to supply the large subunit with the substrate ammonia. This Escherichia coli O157:H7 protein is Carbamoyl phosphate synthase small chain.